A 27-amino-acid polypeptide reads, in one-letter code: Trypsin inhibitor 1 (27 aa).

Homodimer. In terms of processing, contains disulfide bonds. Post-translationally, glycosylated.

Functionally, inhibits trypsin (IC(50)=1.25 uM) but not chymotrypsin or papain. Has antibacterial activity against S.enterica ATCC 10708 (MIC=5 ug/ml) and S.aureus ATCC 25923 (MIC=5 ug/ml) but not against B.subtilis ATCC 6633 or P.aeruginosa ATCC 25619. Has no hemolytic activity against human erythrocytes. Is not toxic to mice. This Jatropha curcas (Barbados nut) protein is Trypsin inhibitor 1.